Consider the following 372-residue polypeptide: 4-hydroxy-3-methylbut-2-en-1-yl diphosphate synthase (flavodoxin) (372 aa).

[4Fe-4S] cluster-binding residues include C270, C273, C305, and E312.

The protein belongs to the IspG family. [4Fe-4S] cluster serves as cofactor.

The catalysed reaction is (2E)-4-hydroxy-3-methylbut-2-enyl diphosphate + oxidized [flavodoxin] + H2O + 2 H(+) = 2-C-methyl-D-erythritol 2,4-cyclic diphosphate + reduced [flavodoxin]. Its pathway is isoprenoid biosynthesis; isopentenyl diphosphate biosynthesis via DXP pathway; isopentenyl diphosphate from 1-deoxy-D-xylulose 5-phosphate: step 5/6. Converts 2C-methyl-D-erythritol 2,4-cyclodiphosphate (ME-2,4cPP) into 1-hydroxy-2-methyl-2-(E)-butenyl 4-diphosphate. The sequence is that of 4-hydroxy-3-methylbut-2-en-1-yl diphosphate synthase (flavodoxin) from Aliivibrio fischeri (strain ATCC 700601 / ES114) (Vibrio fischeri).